Reading from the N-terminus, the 310-residue chain is Acetylglutamate kinase (310 aa).

Residues 74-75 (GG), R96, and N201 contribute to the substrate site.

The protein belongs to the acetylglutamate kinase family. ArgB subfamily.

Its subcellular location is the cytoplasm. The catalysed reaction is N-acetyl-L-glutamate + ATP = N-acetyl-L-glutamyl 5-phosphate + ADP. It functions in the pathway amino-acid biosynthesis; L-arginine biosynthesis; N(2)-acetyl-L-ornithine from L-glutamate: step 2/4. Catalyzes the ATP-dependent phosphorylation of N-acetyl-L-glutamate. The polypeptide is Acetylglutamate kinase (Arthrobacter sp. (strain FB24)).